The chain runs to 588 residues: Actin-histidine N-methyltransferase (588 aa).

The segment at 1 to 25 (MGKKSRVKTQKSGTGATASVSPKET) is disordered. Residues 10-25 (QKSGTGATASVSPKET) show a composition bias toward polar residues. S-adenosyl-L-methionine-binding positions include arginine 75, 104 to 106 (EGF), arginine 254, 275 to 279 (DMCNH), and 325 to 327 (SGF). The 221-residue stretch at 94–314 (EGFEMVNFKE…AGEQIYIFYG (221 aa)) folds into the SET domain. Residues 546–588 (VNGENSIPNGTRSGKENFNQEGSERATEGTKESSSDSTAGARE) are disordered. Over residues 548 to 566 (GENSIPNGTRSGKENFNQE) the composition is skewed to polar residues. Positions 567 to 579 (GSERATEGTKESS) are enriched in basic and acidic residues.

Belongs to the class V-like SAM-binding methyltransferase superfamily. SETD3 actin-histidine methyltransferase family. As to quaternary structure, interacts with MYOD1. Post-translationally, phosphorylated by GSK3B, which is required for recognition by the SCF(FBXW7) complex and subsequent degradation. In terms of processing, ubiquitinated by the SCF(FBXW7) complex following phosphorylation by GSK3B, leading to its degradation by the proteasome.

Its subcellular location is the cytoplasm. It is found in the nucleus. The catalysed reaction is L-histidyl-[protein] + S-adenosyl-L-methionine = N(tele)-methyl-L-histidyl-[protein] + S-adenosyl-L-homocysteine + H(+). Protein-histidine N-methyltransferase that specifically mediates 3-methylhistidine (tele-methylhistidine) methylation of actin at 'His-73'. Histidine methylation of actin is required for smooth muscle contraction of the laboring uterus during delivery. Does not have protein-lysine N-methyltransferase activity and probably only catalyzes histidine methylation of actin. This chain is Actin-histidine N-methyltransferase, found in Canis lupus familiaris (Dog).